Consider the following 122-residue polypeptide: Large ribosomal subunit protein uL18 (122 aa).

It belongs to the universal ribosomal protein uL18 family. As to quaternary structure, part of the 50S ribosomal subunit; part of the 5S rRNA/L5/L18/L25 subcomplex. Contacts the 5S and 23S rRNAs.

In terms of biological role, this is one of the proteins that bind and probably mediate the attachment of the 5S RNA into the large ribosomal subunit, where it forms part of the central protuberance. The protein is Large ribosomal subunit protein uL18 of Ruminiclostridium cellulolyticum (strain ATCC 35319 / DSM 5812 / JCM 6584 / H10) (Clostridium cellulolyticum).